We begin with the raw amino-acid sequence, 332 residues long: Tsukubadiene synthase (332 aa).

Mg(2+) is bound by residues Asp75 and Glu80. A DDXXXE motif motif is present at residues 75–80 (DDHLDE). Arg165 provides a ligand contact to substrate. Residues Ser212, Ser216, and Glu220 each contribute to the Mg(2+) site. The SXXXSXXXE motif signature appears at 212–220 (SDLHSFQLE). 298–299 (RY) provides a ligand contact to substrate.

This sequence belongs to the terpene synthase family. It depends on Mg(2+) as a cofactor.

It carries out the reaction (2E,6E,10E)-geranylgeranyl diphosphate = tsukubadiene + diphosphate. Catalyzes the formation of the 5-9-5 ring skeleton (3S,6S,11R,14S)-tsukubadiene from geranylgeranyl diphosphate (GGPP) via a 1,11-cyclization and a 10Re,14Re-cyclization. The polypeptide is Tsukubadiene synthase (Streptomyces tsukubensis (strain DSM 42081 / NBRC 108919 / NRRL 18488 / 9993)).